Consider the following 122-residue polypeptide: Small ribosomal subunit protein uS13 (122 aa).

The tract at residues 99-122 (RGQRTHTNARTRKGPAKAIAGKKK) is disordered.

The protein belongs to the universal ribosomal protein uS13 family. As to quaternary structure, part of the 30S ribosomal subunit. Forms a loose heterodimer with protein S19. Forms two bridges to the 50S subunit in the 70S ribosome.

Its function is as follows. Located at the top of the head of the 30S subunit, it contacts several helices of the 16S rRNA. In the 70S ribosome it contacts the 23S rRNA (bridge B1a) and protein L5 of the 50S subunit (bridge B1b), connecting the 2 subunits; these bridges are implicated in subunit movement. Contacts the tRNAs in the A and P-sites. The polypeptide is Small ribosomal subunit protein uS13 (Cereibacter sphaeroides (strain ATCC 17025 / ATH 2.4.3) (Rhodobacter sphaeroides)).